Reading from the N-terminus, the 807-residue chain is MSGWQRIYYKLLNLPLQVLVKSKSIPAEPAQELGLDTSRPVMYVLPYNSKADLLTLRAQCLAHDLPDPLEPLEIDGALLPRYVFIHGGPRVFTYYTPKEESIKLFHDYLDLHRNHPDLDVQMVPVSVMFGRSPGREKGEVNPPLRMLNGIQKFFAVSWLGRDSFVRFSPSVSLRRMADEHGTDKIIAQKLARVARMHFARQRLAAVGPRLPARQDLFNKLLASKAIARAVEDEARSKKISHEKAQQNAIALMEEIAANFSYEMIRLTDRILGFTWNRLYQGINVHNAERVRQLAHDGHEIVYVPCHRSHMDYLLLSYVLYHQGLVPPHIAAGINLNFWPAGPIFRRLGAFFIRRTFKGNKLYSTVFREYLGELFSRGYSVEYFVEGGRSRTGRLLDPKTGTLSMTIQAMLRGGTRPITLVPIYIGYEHVMEVGTYAKELRGATKEKESLPQMVRGLSKLRNLGQGYVNFGEPLPLMTYLNQHVPDWREAIDPIEAVRPSWLTPTVNSIAADLMVRINNAGAANAMNLCCTALLASRQRSLTREQLTQQLECYLALLRNVPYSPDATAPSASASELIDHALQMNKFEVEKDTIGDIIILPREQAVLMTYYRNNIAHMLVMPSLLAALVTQHRHLSRAEVLRHVETLYPFLKAELFLRWEKAELAGVVDALIAEMLRQELIVVDGDVMSLNPSHSRSLQLLAAGARETLQRYAITFWLLSANPAINRSSLEKESRTVAQRLSVLHGINAPEFFDKAVFSTLVLTLRDEGYISDTGDAEPEETLKVYRMLADLITSDVRLTIESVTQDDA.

The HXXXXD motif motif lies at 305 to 310 (CHRSHM).

Belongs to the GPAT/DAPAT family.

It localises to the cell inner membrane. It catalyses the reaction sn-glycerol 3-phosphate + an acyl-CoA = a 1-acyl-sn-glycero-3-phosphate + CoA. It participates in phospholipid metabolism; CDP-diacylglycerol biosynthesis; CDP-diacylglycerol from sn-glycerol 3-phosphate: step 1/3. The polypeptide is Glycerol-3-phosphate acyltransferase (Klebsiella pneumoniae subsp. pneumoniae (strain ATCC 700721 / MGH 78578)).